The sequence spans 217 residues: FMN-dependent NADH:quinone oxidoreductase (217 aa).

FMN-binding positions include S10, 17-19, and 137-140; these read SAS and SRGG.

The protein belongs to the azoreductase type 1 family. Homodimer. Requires FMN as cofactor.

It carries out the reaction 2 a quinone + NADH + H(+) = 2 a 1,4-benzosemiquinone + NAD(+). The enzyme catalyses N,N-dimethyl-1,4-phenylenediamine + anthranilate + 2 NAD(+) = 2-(4-dimethylaminophenyl)diazenylbenzoate + 2 NADH + 2 H(+). Functionally, quinone reductase that provides resistance to thiol-specific stress caused by electrophilic quinones. Its function is as follows. Also exhibits azoreductase activity. Catalyzes the reductive cleavage of the azo bond in aromatic azo compounds to the corresponding amines. In Streptomyces avermitilis (strain ATCC 31267 / DSM 46492 / JCM 5070 / NBRC 14893 / NCIMB 12804 / NRRL 8165 / MA-4680), this protein is FMN-dependent NADH:quinone oxidoreductase.